Reading from the N-terminus, the 239-residue chain is MDEMDDFFGNDELDREPSPFGEEAIEDNTGEEGSRRIIEPKLLRTKKLTNPRLALNEKTLTGPKGITALREAFQNFNPNPKDDPYKNLEKMMKKYAYWGHLMFPKMKTEDVLNRVETLGTRRQVKLYIMKQRLGESTDDVENEKRETKSKNGIIDDGADDDEDDLFNDLPEKETPTKPINHTEKVVDSPEKKNGQVSNNDAEEEEYRMMEEERLREEQEAREAEAEDELMEDFDLNNDW.

2 stretches are compositionally biased toward acidic residues: residues 1–14 and 156–166; these read MDEM…DELD and DGADDDEDDLF. 2 disordered regions span residues 1–38 and 135–239; these read MDEM…RRII and ESTD…NNDW. Basic and acidic residues-rich tracts occupy residues 169 to 193 and 206 to 223; these read LPEK…EKKN and YRMM…AREA. The segment covering 224 to 239 has biased composition (acidic residues); sequence EAEDELMEDFDLNNDW.

The protein belongs to the CSM3 family.

The protein resides in the cytoplasm. It is found in the nucleus. In terms of biological role, required for normal progression of S-phase. Important for cell survival after DNA damage or replication stress. The protein is Protein TIPIN homolog of Caenorhabditis briggsae.